The chain runs to 107 residues: NADH-quinone oxidoreductase subunit K (107 aa).

3 helical membrane-spanning segments follow: residues 9 to 29 (IGVNHFLTISVILFGLGMFAV), 36 to 56 (IVILMGVELILNAANINFLTF), and 68 to 88 (FSLFVIVLAAAEAAIALAIVI).

The protein belongs to the complex I subunit 4L family. NDH-1 is composed of 14 different subunits. Subunits NuoA, H, J, K, L, M, N constitute the membrane sector of the complex.

It localises to the cell inner membrane. It carries out the reaction a quinone + NADH + 5 H(+)(in) = a quinol + NAD(+) + 4 H(+)(out). In terms of biological role, NDH-1 shuttles electrons from NADH, via FMN and iron-sulfur (Fe-S) centers, to quinones in the respiratory chain. The immediate electron acceptor for the enzyme in this species is believed to be a menaquinone. Couples the redox reaction to proton translocation (for every two electrons transferred, four hydrogen ions are translocated across the cytoplasmic membrane), and thus conserves the redox energy in a proton gradient. The protein is NADH-quinone oxidoreductase subunit K of Chlorobaculum tepidum (strain ATCC 49652 / DSM 12025 / NBRC 103806 / TLS) (Chlorobium tepidum).